Reading from the N-terminus, the 878-residue chain is Alanine--tRNA ligase (878 aa).

Zn(2+) is bound by residues histidine 565, histidine 569, cysteine 667, and histidine 671.

The protein belongs to the class-II aminoacyl-tRNA synthetase family. Zn(2+) serves as cofactor.

It is found in the cytoplasm. The catalysed reaction is tRNA(Ala) + L-alanine + ATP = L-alanyl-tRNA(Ala) + AMP + diphosphate. In terms of biological role, catalyzes the attachment of alanine to tRNA(Ala) in a two-step reaction: alanine is first activated by ATP to form Ala-AMP and then transferred to the acceptor end of tRNA(Ala). Also edits incorrectly charged Ser-tRNA(Ala) and Gly-tRNA(Ala) via its editing domain. In Desulforamulus reducens (strain ATCC BAA-1160 / DSM 100696 / MI-1) (Desulfotomaculum reducens), this protein is Alanine--tRNA ligase.